Reading from the N-terminus, the 20-residue chain is Cytochrome c oxidase subunit 6A1, mitochondrial (20 aa).

This sequence belongs to the cytochrome c oxidase subunit 6A family. As to quaternary structure, component of the cytochrome c oxidase (complex IV, CIV), a multisubunit enzyme composed of 14 subunits. The complex is composed of a catalytic core of 3 subunits MT-CO1, MT-CO2 and MT-CO3, encoded in the mitochondrial DNA, and 11 supernumerary subunits COX4I, COX5A, COX5B, COX6A, COX6B, COX6C, COX7A, COX7B, COX7C, COX8 and NDUFA4, which are encoded in the nuclear genome. The complex exists as a monomer or a dimer and forms supercomplexes (SCs) in the inner mitochondrial membrane with NADH-ubiquinone oxidoreductase (complex I, CI) and ubiquinol-cytochrome c oxidoreductase (cytochrome b-c1 complex, complex III, CIII), resulting in different assemblies (supercomplex SCI(1)III(2)IV(1) and megacomplex MCI(2)III(2)IV(2)). In terms of tissue distribution, liver specific isoform.

It is found in the mitochondrion inner membrane. Its pathway is energy metabolism; oxidative phosphorylation. In terms of biological role, component of the cytochrome c oxidase, the last enzyme in the mitochondrial electron transport chain which drives oxidative phosphorylation. The respiratory chain contains 3 multisubunit complexes succinate dehydrogenase (complex II, CII), ubiquinol-cytochrome c oxidoreductase (cytochrome b-c1 complex, complex III, CIII) and cytochrome c oxidase (complex IV, CIV), that cooperate to transfer electrons derived from NADH and succinate to molecular oxygen, creating an electrochemical gradient over the inner membrane that drives transmembrane transport and the ATP synthase. Cytochrome c oxidase is the component of the respiratory chain that catalyzes the reduction of oxygen to water. Electrons originating from reduced cytochrome c in the intermembrane space (IMS) are transferred via the dinuclear copper A center (CU(A)) of subunit 2 and heme A of subunit 1 to the active site in subunit 1, a binuclear center (BNC) formed by heme A3 and copper B (CU(B)). The BNC reduces molecular oxygen to 2 water molecules unsing 4 electrons from cytochrome c in the IMS and 4 protons from the mitochondrial matrix. The sequence is that of Cytochrome c oxidase subunit 6A1, mitochondrial (COX6A1) from Ovis aries (Sheep).